The primary structure comprises 248 residues: DNA/RNA-binding protein ALBA1 (248 aa).

A disordered region spans residues 217-248 (GRDGGYRGGNRGGSRSGFRGGRGGFRGGRALS). Residues 222–248 (YRGGNRGGSRSGFRGGRGGFRGGRALS) show a composition bias toward gly residues.

It belongs to the histone-like Alba family. May form homodimers. Identified in a TARE6-associated complex consisting of over 30 proteins and including ALBA1, ALBA2 and ALBA4; the complex binds to the non-coding subtelomeric repeat region TARE6.

Its subcellular location is the nucleus. It localises to the chromosome. It is found in the telomere. The protein localises to the cytoplasm. In terms of biological role, possesses DNA- and RNA-binding activities. During the asexual blood stages binds to a sub-population of mature mRNAs and regulates the timing of their translation. Binds to DNA with relaxed sequence specificity. Associates with the subtelomeric TARE6 repeats. This is DNA/RNA-binding protein ALBA1 from Plasmodium falciparum (isolate 3D7).